The sequence spans 487 residues: Glutamyl-tRNA(Gln) amidotransferase subunit A (487 aa).

Active-site charge relay system residues include lysine 79 and serine 158. Catalysis depends on serine 182, which acts as the Acyl-ester intermediate.

Belongs to the amidase family. GatA subfamily. As to quaternary structure, heterotrimer of A, B and C subunits.

The enzyme catalyses L-glutamyl-tRNA(Gln) + L-glutamine + ATP + H2O = L-glutaminyl-tRNA(Gln) + L-glutamate + ADP + phosphate + H(+). Allows the formation of correctly charged Gln-tRNA(Gln) through the transamidation of misacylated Glu-tRNA(Gln) in organisms which lack glutaminyl-tRNA synthetase. The reaction takes place in the presence of glutamine and ATP through an activated gamma-phospho-Glu-tRNA(Gln). The sequence is that of Glutamyl-tRNA(Gln) amidotransferase subunit A from Ehrlichia canis (strain Jake).